We begin with the raw amino-acid sequence, 103 residues long: uncharacterized protein (103 aa).

Residues 69-103 form a disordered region; it reads SSISYPGGGGGGGGSAKSLSSSKPGGGGGSPLIFL. Composition is skewed to gly residues over residues 74-83 and 92-103; these read PGGGGGGGGS and PGGGGGSPLIFL.

This is an uncharacterized protein from Saccharomyces cerevisiae (strain ATCC 204508 / S288c) (Baker's yeast).